A 35-amino-acid polypeptide reads, in one-letter code: Toxin Ado1 (35 aa).

3 cysteine pairs are disulfide-bonded: C5/C20, C12/C25, and C19/C32.

Its subcellular location is the secreted. Binds reversibly and blocks P/Q-type voltage-gated calcium channels (Cav). The protein is Toxin Ado1 of Agriosphodrus dohrni (Japanese assassin-bug).